A 290-amino-acid polypeptide reads, in one-letter code: Bifunctional protein FolD (290 aa).

NADP(+) contacts are provided by residues 165 to 167 (GRS), Ser190, and Ile231.

This sequence belongs to the tetrahydrofolate dehydrogenase/cyclohydrolase family. In terms of assembly, homodimer.

It carries out the reaction (6R)-5,10-methylene-5,6,7,8-tetrahydrofolate + NADP(+) = (6R)-5,10-methenyltetrahydrofolate + NADPH. The catalysed reaction is (6R)-5,10-methenyltetrahydrofolate + H2O = (6R)-10-formyltetrahydrofolate + H(+). It functions in the pathway one-carbon metabolism; tetrahydrofolate interconversion. Its function is as follows. Catalyzes the oxidation of 5,10-methylenetetrahydrofolate to 5,10-methenyltetrahydrofolate and then the hydrolysis of 5,10-methenyltetrahydrofolate to 10-formyltetrahydrofolate. In Aromatoleum aromaticum (strain DSM 19018 / LMG 30748 / EbN1) (Azoarcus sp. (strain EbN1)), this protein is Bifunctional protein FolD.